A 478-amino-acid polypeptide reads, in one-letter code: Bifunctional protein HldE (478 aa).

The ribokinase stretch occupies residues 1 to 318 (MKVTLPDFRQ…ENAIRGRADT (318 aa)). 195-198 (NLSE) serves as a coordination point for ATP. Asp-264 is an active-site residue. A cytidylyltransferase region spans residues 344–478 (MTNGCFDILH…NMIKASTSQS (135 aa)).

It in the N-terminal section; belongs to the carbohydrate kinase PfkB family. The protein in the C-terminal section; belongs to the cytidylyltransferase family. Homodimer.

The enzyme catalyses D-glycero-beta-D-manno-heptose 7-phosphate + ATP = D-glycero-beta-D-manno-heptose 1,7-bisphosphate + ADP + H(+). It catalyses the reaction D-glycero-beta-D-manno-heptose 1-phosphate + ATP + H(+) = ADP-D-glycero-beta-D-manno-heptose + diphosphate. Its pathway is nucleotide-sugar biosynthesis; ADP-L-glycero-beta-D-manno-heptose biosynthesis; ADP-L-glycero-beta-D-manno-heptose from D-glycero-beta-D-manno-heptose 7-phosphate: step 1/4. It participates in nucleotide-sugar biosynthesis; ADP-L-glycero-beta-D-manno-heptose biosynthesis; ADP-L-glycero-beta-D-manno-heptose from D-glycero-beta-D-manno-heptose 7-phosphate: step 3/4. Functionally, catalyzes the phosphorylation of D-glycero-D-manno-heptose 7-phosphate at the C-1 position to selectively form D-glycero-beta-D-manno-heptose-1,7-bisphosphate. In terms of biological role, catalyzes the ADP transfer from ATP to D-glycero-beta-D-manno-heptose 1-phosphate, yielding ADP-D-glycero-beta-D-manno-heptose. This is Bifunctional protein HldE from Pectobacterium atrosepticum (strain SCRI 1043 / ATCC BAA-672) (Erwinia carotovora subsp. atroseptica).